Consider the following 497-residue polypeptide: Replication factor C large subunit (497 aa).

50 to 57 (GPAGVGKT) serves as a coordination point for ATP. Residues 428–455 (KRRSLGRDEGKAFFEKKPKKQTPDKKQM) are compositionally biased toward basic and acidic residues. The interval 428-497 (KRRSLGRDEG…AKPQKTLFDF (70 aa)) is disordered. Positions 456-465 (DLTQIINSTP) are enriched in polar residues. Positions 466–476 (QEDKVEKKETE) are enriched in basic and acidic residues.

It belongs to the activator 1 small subunits family. RfcL subfamily. As to quaternary structure, heteromultimer composed of small subunits (RfcS) and large subunits (RfcL).

Its function is as follows. Part of the RFC clamp loader complex which loads the PCNA sliding clamp onto DNA. This chain is Replication factor C large subunit, found in Methanococcoides burtonii (strain DSM 6242 / NBRC 107633 / OCM 468 / ACE-M).